The primary structure comprises 416 residues: Gamma-glutamyl phosphate reductase (416 aa).

Belongs to the gamma-glutamyl phosphate reductase family.

The protein resides in the cytoplasm. The catalysed reaction is L-glutamate 5-semialdehyde + phosphate + NADP(+) = L-glutamyl 5-phosphate + NADPH + H(+). It functions in the pathway amino-acid biosynthesis; L-proline biosynthesis; L-glutamate 5-semialdehyde from L-glutamate: step 2/2. Catalyzes the NADPH-dependent reduction of L-glutamate 5-phosphate into L-glutamate 5-semialdehyde and phosphate. The product spontaneously undergoes cyclization to form 1-pyrroline-5-carboxylate. The protein is Gamma-glutamyl phosphate reductase of Glaesserella parasuis serovar 5 (strain SH0165) (Haemophilus parasuis).